The primary structure comprises 876 residues: Alanine--tRNA ligase (876 aa).

At Lys74 the chain carries N6-acetyllysine. 4 residues coordinate Zn(2+): His564, His568, Cys666, and His670.

It belongs to the class-II aminoacyl-tRNA synthetase family. As to quaternary structure, homotetramer. The cofactor is Zn(2+).

It localises to the cytoplasm. It carries out the reaction tRNA(Ala) + L-alanine + ATP = L-alanyl-tRNA(Ala) + AMP + diphosphate. Functionally, catalyzes the attachment of alanine to tRNA(Ala) in a two-step reaction: alanine is first activated by ATP to form Ala-AMP and then transferred to the acceptor end of tRNA(Ala). Also edits incorrectly charged Ser-tRNA(Ala) and Gly-tRNA(Ala) via its editing domain. The polypeptide is Alanine--tRNA ligase (Shigella dysenteriae serotype 1 (strain Sd197)).